Reading from the N-terminus, the 143-residue chain is MSTFFAKANAVERKWYVIDAAGLPLGRLATEAARILRGKHKPTFTPNVDTGDHVIIINAEKVVLTGNKLDQKMYRRHSGYPGGLKETPYRKLMQNMPERAVEHAVKGMLPHNKLGAQMYTKLKVYRDENHPHQAQQPEVWTIQ.

This sequence belongs to the universal ribosomal protein uL13 family. Part of the 50S ribosomal subunit.

Its function is as follows. This protein is one of the early assembly proteins of the 50S ribosomal subunit, although it is not seen to bind rRNA by itself. It is important during the early stages of 50S assembly. This chain is Large ribosomal subunit protein uL13, found in Desulfitobacterium hafniense (strain DSM 10664 / DCB-2).